Reading from the N-terminus, the 842-residue chain is TATA box-binding protein-associated factor, RNA polymerase I, subunit C (842 aa).

Disordered regions lie at residues Ser-574–Thr-605, Arg-667–Glu-690, and Gln-702–Phe-842. A compositionally biased stretch (basic and acidic residues) spans Arg-577–Ala-588. Residues Asp-745–Ala-760 show a composition bias toward polar residues. Over residues Gln-783 to Met-794 the composition is skewed to basic and acidic residues. Thr-808 carries the post-translational modification Phosphothreonine. The span at Pro-809–Pro-826 shows a compositional bias: low complexity. A compositionally biased stretch (basic residues) spans Pro-833–Phe-842.

In terms of assembly, component of the transcription factor SL1/TIF-IB complex, composed of TBP and at least TAF1A, TAF1B, TAF1C and TAF1D. In the complex interacts directly with TBP, TAF1A and TAF1B. Interaction of the SL1/TIF-IB subunits with TBP excludes interaction of TBP with the transcription factor IID (TFIID) subunits. Interacts with MYC and RRN3. Interacts with p53/TP53; the interaction prevents the association of SL1/TIF-IB with UBTF and represses RNA polymerase I transcription. Part of Pol I pre-initiation complex (PIC), in which Pol I core assembles with RRN3 and promoter-bound UTBF and SL1/TIF-IB complex.

Its subcellular location is the nucleus. The protein localises to the nucleolus. Functionally, component of the transcription factor SL1/TIF-IB complex, which is involved in the assembly of the PIC (pre-initiation complex) during RNA polymerase I-dependent transcription. The rate of PIC formation probably is primarily dependent on the rate of association of SL1/TIF-IB with the rDNA promoter. SL1/TIF-IB is involved in stabilization of nucleolar transcription factor 1/UBTF on rDNA. Formation of SL1/TIF-IB excludes the association of TBP with TFIID subunits. Recruits RNA polymerase I to the rRNA gene promoter via interaction with RRN3. In Rattus norvegicus (Rat), this protein is TATA box-binding protein-associated factor, RNA polymerase I, subunit C (Taf1c).